A 155-amino-acid chain; its full sequence is Small ribosomal subunit protein uS7cz/uS7cy (155 aa).

The protein belongs to the universal ribosomal protein uS7 family. Part of the 30S ribosomal subunit.

It is found in the plastid. The protein resides in the chloroplast. Functionally, one of the primary rRNA binding proteins, it binds directly to 16S rRNA where it nucleates assembly of the head domain of the 30S subunit. The protein is Small ribosomal subunit protein uS7cz/uS7cy (rps7-A) of Cucumis sativus (Cucumber).